A 310-amino-acid chain; its full sequence is TLC domain-containing protein 2 (310 aa).

A run of 6 helical transmembrane segments spans residues 6–26 (LLVAGASFTAFRGLHWGLQLL), 40–60 (NIFVSLIHSLLSGVGALVGLW), 79–99 (VLVAVSVGYFAADGVDMLWNQ), 117–137 (CLSTAVVSGHYVGFSMVSLLL), 167–187 (ASLATLVLFRLLPLGWMSLWL), and 194–214 (LSLALVLLCVAGLVTVGSISI). A TLC domain is found at 33–227 (RDRWMWRNIF…IRILTKDILQ (195 aa)).

The protein belongs to the TLCD family.

Its subcellular location is the cell membrane. Regulates the composition and fluidity of the plasma membrane. Inhibits the incorporation of membrane-fluidizing phospholipids containing omega-3 long-chain polyunsaturated fatty acids (LCPUFA) and thereby promotes membrane rigidity. Does not appear to have any effect on LCPUFA synthesis. The protein is TLC domain-containing protein 2 (Tlcd2) of Mus musculus (Mouse).